The chain runs to 145 residues: Large ribosomal subunit protein cL37 (145 aa).

The transit peptide at 1–63 (MALLCFNSFT…PRKNSIFIAS (63 aa)) directs the protein to the chloroplast. Residues 125–145 (KRRLRKKGNWPPSKMKKLEGV) form a disordered region.

The protein belongs to the chloroplast-specific ribosomal protein cL37 family. Part of the 50S ribosomal subunit.

It localises to the plastid. The protein localises to the chloroplast. This is Large ribosomal subunit protein cL37 (PSRP5) from Pisum sativum (Garden pea).